Here is a 451-residue protein sequence, read N- to C-terminus: UDP-N-acetylmuramate--L-alanine ligase (451 aa).

Residue Gly110–Thr116 participates in ATP binding.

This sequence belongs to the MurCDEF family.

The protein resides in the cytoplasm. The catalysed reaction is UDP-N-acetyl-alpha-D-muramate + L-alanine + ATP = UDP-N-acetyl-alpha-D-muramoyl-L-alanine + ADP + phosphate + H(+). Its pathway is cell wall biogenesis; peptidoglycan biosynthesis. Functionally, cell wall formation. The sequence is that of UDP-N-acetylmuramate--L-alanine ligase from Francisella tularensis subsp. holarctica (strain FTNF002-00 / FTA).